The following is a 445-amino-acid chain: Putative H/ACA ribonucleoprotein complex subunit 4 (445 aa).

Residues 1–32 (MGKKDKRSKLEGDDLAEAQQKGSFQLPSSNET) are disordered. Polar residues predominate over residues 20–32 (QKGSFQLPSSNET). Catalysis depends on aspartate 113, which acts as the Nucleophile. The region spanning 284-359 (HKRVVVKDSC…VVAKSKRVIM (76 aa)) is the PUA domain. The disordered stretch occupies residues 386 to 445 (LDKFGKPNDTTPKSWAKEYVQTSTKKEVKKEETPDEEEEEAPKKKSKKSKKQESSDSDSD).

The protein belongs to the pseudouridine synthase TruB family. In terms of assembly, component of the small nucleolar ribonucleoprotein particle containing H/ACA-type snoRNAs (H/ACA snoRNPs).

The protein resides in the nucleus. The protein localises to the nucleolus. The enzyme catalyses a uridine in RNA = a pseudouridine in RNA. Its function is as follows. Plays a central role in ribosomal RNA processing. Probable catalytic subunit of H/ACA small nucleolar ribonucleoprotein (H/ACA snoRNP) complex, which catalyzes pseudouridylation of rRNA. This involves the isomerization of uridine such that the ribose is subsequently attached to C5, instead of the normal N1. Pseudouridine ('psi') residues may serve to stabilize the conformation of rRNAs. The polypeptide is Putative H/ACA ribonucleoprotein complex subunit 4 (Caenorhabditis elegans).